We begin with the raw amino-acid sequence, 333 residues long: Potassium channel protein 1 (333 aa).

At 1-6 the chain is on the cytoplasmic side; that stretch reads METYEK. Residues 7 to 27 form a helical membrane-spanning segment; it reads IELGIIVIILLILIESVILMT. The Extracellular segment spans residues 28–60; that stretch reads VEGWDFFTAFYTAVVTISTVGYGDYTPQTFLGK. A Selectivity filter motif is present at residues 46-51; sequence TVGYGD. The helical transmembrane segment at 61 to 81 threads the bilayer; it reads LSVIIYIFAGVGAVAYTMGNI. Over 82–333 the chain is Cytoplasmic; that stretch reads ASFFIEGHFR…KLKRYVEGVE (252 aa). One can recognise an RCK N-terminal domain in the interval 107 to 229; it reads NNHYIICGYG…GADRAVCPYI (123 aa). Positions 246-331 constitute an RCK C-terminal domain; the sequence is EFIHSLVATE…LEKLKRYVEG (86 aa).

In terms of assembly, homotetramer.

It is found in the cell membrane. Functionally, potassium channel protein. Seems to conduct potassium at low membrane potentials. The polypeptide is Potassium channel protein 1 (Methanocaldococcus jannaschii (strain ATCC 43067 / DSM 2661 / JAL-1 / JCM 10045 / NBRC 100440) (Methanococcus jannaschii)).